The primary structure comprises 702 residues: Ribosomal RNA large subunit methyltransferase K/L (702 aa).

The 112-residue stretch at 43–154 (LVYQSLMWSR…KETASIALDL (112 aa)) folds into the THUMP domain.

Belongs to the methyltransferase superfamily. RlmKL family.

It is found in the cytoplasm. The catalysed reaction is guanosine(2445) in 23S rRNA + S-adenosyl-L-methionine = N(2)-methylguanosine(2445) in 23S rRNA + S-adenosyl-L-homocysteine + H(+). It carries out the reaction guanosine(2069) in 23S rRNA + S-adenosyl-L-methionine = N(2)-methylguanosine(2069) in 23S rRNA + S-adenosyl-L-homocysteine + H(+). In terms of biological role, specifically methylates the guanine in position 2445 (m2G2445) and the guanine in position 2069 (m7G2069) of 23S rRNA. The sequence is that of Ribosomal RNA large subunit methyltransferase K/L from Shigella dysenteriae serotype 1 (strain Sd197).